The chain runs to 93 residues: Small ribosomal subunit protein uS19 (93 aa).

Belongs to the universal ribosomal protein uS19 family.

Functionally, protein S19 forms a complex with S13 that binds strongly to the 16S ribosomal RNA. The sequence is that of Small ribosomal subunit protein uS19 from Acidothermus cellulolyticus (strain ATCC 43068 / DSM 8971 / 11B).